Here is a 542-residue protein sequence, read N- to C-terminus: Organic anion transporter 3 (542 aa).

Over 1 to 9 (MTFSEILDR) the chain is Cytoplasmic. Residue serine 4 is modified to Phosphoserine. A helical transmembrane segment spans residues 10-30 (VGSMGHFQFLHVAILGLPILN). At 31-123 (MANHNLLQIF…LVCNSNKLKE (93 aa)) the chain is on the extracellular side. N-linked (GlcNAc...) asparagine glycosylation is found at asparagine 86 and asparagine 102. A helical membrane pass occupies residues 124 to 144 (MAQSIFMAGILIGGLVLGDLS). The Cytoplasmic segment spans residues 145-154 (DRFGRRPILT). A helical membrane pass occupies residues 155–175 (CSYLLLAASGSGAAFSPTFPI). Residue tyrosine 176 is a topological domain, extracellular. Residues 177–197 (MVFRFLCGFGISGITLSTVIL) form a helical membrane-spanning segment. Residues 198–212 (NVEWVPTRMRAIMST) are Cytoplasmic-facing. A helical transmembrane segment spans residues 213–233 (ALGYCYTFGQFILPGLAYAIP). Topologically, residues 234 to 236 (QWR) are extracellular. The helical transmembrane segment at 237 to 257 (WLQLTVSIPFFVFFLSSWWTP) threads the bilayer. Residues 258–327 (ESIRWLVLSG…FRIPMLRRMT (70 aa)) are Cytoplasmic-facing. The helical transmembrane segment at 328-348 (FCLSLAWFATGFAYYSLAMGV) threads the bilayer. Residues 349–354 (EEFGVN) lie on the Extracellular side of the membrane. A helical membrane pass occupies residues 355 to 375 (LYILQIIFGGVDVPAKFITIL). Over 376–386 (SLSYLGRHTTQ) the chain is Cytoplasmic. The helical transmembrane segment at 387–407 (AAALLLAGGAILALTFVPLDL) threads the bilayer. Residues 408-411 (QTVR) are Extracellular-facing. Residues 412–432 (TVLAVFGKGCLSSSFSCLFLY) traverse the membrane as a helical segment. Residues 433–471 (TSELYPTVIRQTGMGVSNLWTRVGSMVSPLVKITGEVQP) are Cytoplasmic-facing. Residues 472-492 (FIPNIIYGITALLGGSAALFL) form a helical membrane-spanning segment. The Extracellular portion of the chain corresponds to 493-542 (PETLNQPLPETIEDLENWSLRAKKPKQEPEVEKASQRIPLQPHGPGLGSS). Residues 515-542 (KKPKQEPEVEKASQRIPLQPHGPGLGSS) are disordered. Over residues 517-527 (PKQEPEVEKAS) the composition is skewed to basic and acidic residues.

It belongs to the major facilitator (TC 2.A.1) superfamily. Organic cation transporter (TC 2.A.1.19) family. In terms of tissue distribution, strongly expressed in kidney. Weaker expression in brain and skeletal muscle. Expressed in adrenal glands.

Its subcellular location is the basolateral cell membrane. The catalysed reaction is estrone 3-sulfate(out) + glutarate(in) = estrone 3-sulfate(in) + glutarate(out). It catalyses the reaction estrone 3-sulfate(in) + 2-oxoglutarate(out) = estrone 3-sulfate(out) + 2-oxoglutarate(in). It carries out the reaction glutarate(in) + 2-oxoglutarate(out) = glutarate(out) + 2-oxoglutarate(in). The enzyme catalyses urate(in) + 2-oxoglutarate(out) = urate(out) + 2-oxoglutarate(in). The catalysed reaction is taurocholate(out) + glutarate(in) = taurocholate(in) + glutarate(out). It catalyses the reaction dehydroepiandrosterone 3-sulfate(out) + glutarate(in) = dehydroepiandrosterone 3-sulfate(in) + glutarate(out). It carries out the reaction prostaglandin F2alpha(out) + glutarate(in) = prostaglandin F2alpha(in) + glutarate(out). The enzyme catalyses prostaglandin F2alpha(out) + 2-oxoglutarate(in) = prostaglandin F2alpha(in) + 2-oxoglutarate(out). The catalysed reaction is (R)-carnitine(out) + 2-oxoglutarate(in) = (R)-carnitine(in) + 2-oxoglutarate(out). It catalyses the reaction glutarate(in) + (R)-carnitine(out) = glutarate(out) + (R)-carnitine(in). It carries out the reaction prostaglandin E2(out) + 2-oxoglutarate(in) = prostaglandin E2(in) + 2-oxoglutarate(out). The enzyme catalyses prostaglandin E2(out) + glutarate(in) = prostaglandin E2(in) + glutarate(out). The catalysed reaction is urate(in) + glutarate(out) = urate(out) + glutarate(in). It catalyses the reaction taurocholate(out) + 2-oxoglutarate(in) = taurocholate(in) + 2-oxoglutarate(out). It carries out the reaction dehydroepiandrosterone 3-sulfate(out) + 2-oxoglutarate(in) = dehydroepiandrosterone 3-sulfate(in) + 2-oxoglutarate(out). The enzyme catalyses kynurenate(out) + a dicarboxylate(in) = kynurenate(in) + a dicarboxylate(out). The catalysed reaction is (indol-3-yl)acetate(out) + a dicarboxylate(in) = (indol-3-yl)acetate(in) + a dicarboxylate(out). It catalyses the reaction indoxyl sulfate(out) + a dicarboxylate(in) = indoxyl sulfate(in) + a dicarboxylate(out). It carries out the reaction N-benzoylglycine(out) + a dicarboxylate(in) = N-benzoylglycine(in) + a dicarboxylate(out). The enzyme catalyses 3-carboxy-4-methyl-5-propyl-2-furanpropanoate(out) + a dicarboxylate(in) = 3-carboxy-4-methyl-5-propyl-2-furanpropanoate(in) + a dicarboxylate(out). The catalysed reaction is (6R)-L-erythro-5,6,7,8-tetrahydrobiopterin(out) + a dicarboxylate(in) = (6R)-L-erythro-5,6,7,8-tetrahydrobiopterin(in) + a dicarboxylate(out). It catalyses the reaction L-erythro-7,8-dihydrobiopterin(out) + a dicarboxylate(in) = L-erythro-7,8-dihydrobiopterin(in) + a dicarboxylate(out). It carries out the reaction L-sepiapterin(out) + a dicarboxylate(in) = L-sepiapterin(in) + a dicarboxylate(out). Functions as an organic anion/dicarboxylate exchanger that couples organic anion uptake indirectly to the sodium gradient. Transports organic anions such as estrone 3-sulfate (E1S) and urate in exchange for dicarboxylates such as glutarate or ketoglutarate (2-oxoglutarate). Plays an important role in the excretion of endogenous and exogenous organic anions, especially from the kidney and the brain. E1S transport is pH- and chloride-dependent and may also involve E1S/cGMP exchange. Responsible for the transport of prostaglandin E2 (PGE2) and prostaglandin F2(alpha) (PGF2(alpha)) in the basolateral side of the renal tubule. Involved in the transport of neuroactive tryptophan metabolites kynurenate and xanthurenate. Functions as a biopterin transporters involved in the uptake and the secretion of coenzymes tetrahydrobiopterin (BH4), dihydrobiopterin (BH2) and sepiapterin to urine, thereby determining baseline levels of blood biopterins. May be involved in the basolateral transport of steviol, a metabolite of the popular sugar substitute stevioside. May participate in the detoxification/ renal excretion of drugs and xenobiotics, such as the histamine H(2)-receptor antagonists fexofenadine and cimetidine, the antibiotic benzylpenicillin (PCG), the anionic herbicide 2,4-dichloro-phenoxyacetate (2,4-D), the diagnostic agent p-aminohippurate (PAH), the antiviral acyclovir (ACV), and the mycotoxin ochratoxin (OTA), by transporting these exogenous organic anions across the cell membrane in exchange for dicarboxylates such as 2-oxoglutarate. Contributes to the renal uptake of potent uremic toxins (indoxyl sulfate (IS), indole acetate (IA), hippurate/N-benzoylglycine (HA) and 3-carboxy-4-methyl-5-propyl-2-furanpropionate (CMPF)), pravastatin, PCG, E1S and dehydroepiandrosterone sulfate (DHEAS), and is partly involved in the renal uptake of temocaprilat (an angiotensin-converting enzyme (ACE) inhibitor). May contribute to the release of cortisol in the adrenals. Involved in one of the detoxification systems on the choroid plexus (CP), removes substrates such as E1S or taurocholate (TC), PCG, 2,4-D and PAH, from the cerebrospinal fluid (CSF) to the blood for eventual excretion in urine and bile. Also contributes to the uptake of several other organic compounds such as the prostanoids prostaglandin E(2) and prostaglandin F(2-alpha), L-carnitine, and the therapeutic drugs allopurinol, 6-mercaptopurine (6-MP) and 5-fluorouracil (5-FU). Mediates the transport of PAH, PCG, and the statins pravastatin and pitavastatin, from the cerebrum into the blood circulation across the blood-brain barrier (BBB). In summary, plays a role in the efflux of drugs and xenobiotics, helping reduce their undesired toxicological effects on the body. The chain is Organic anion transporter 3 from Homo sapiens (Human).